We begin with the raw amino-acid sequence, 97 residues long: Putative regulatory protein Dole_1911 (97 aa).

Belongs to the RemA family.

This Desulfosudis oleivorans (strain DSM 6200 / JCM 39069 / Hxd3) (Desulfococcus oleovorans) protein is Putative regulatory protein Dole_1911.